A 359-amino-acid chain; its full sequence is Serpentine receptor class epsilon-13 (359 aa).

7 helical membrane-spanning segments follow: residues 33-53, 74-94, 111-131, 150-170, 180-200, 237-257, and 266-286; these read YLFV…YYLL, AIYL…ILLI, ISLF…AFVA, WLVG…ALDF, VTIF…NFLL, LALS…IDNL, and LNTV…PFVI.

The protein belongs to the nematode receptor-like protein sre family.

It is found in the membrane. In Caenorhabditis elegans, this protein is Serpentine receptor class epsilon-13 (sre-13).